A 239-amino-acid chain; its full sequence is Transmembrane ascorbate ferrireductase 1 (239 aa).

At 1–7 the chain is on the cytoplasmic side; sequence MAVRINA. A helical transmembrane segment spans residues 8-28; it reads MAVTFVAHALAVIAAIMVLVW. A Cytochrome b561 domain is found at 13-216; sequence VAHALAVIAA…FGAFVVLTAS (204 aa). At 29 to 45 the chain is on the lumenal side; the sequence is SISYRGGLAWEATNKNL. The chain crosses the membrane as a helical span at residues 46 to 66; that stretch reads IFNLHPVLMLIGFIILGGEAI. Position 50 (His-50) interacts with heme b. Over 67 to 81 the chain is Cytoplasmic; it reads ISYKSLPLEKPVKKL. A helical membrane pass occupies residues 82–102; that stretch reads IHLILHAIALALGIFGICAAF. Heme b-binding residues include His-83 and His-117. The Lumenal portion of the chain corresponds to 103-119; that stretch reads KNHNESHIPNLYSLHSW. Residues 120–140 traverse the membrane as a helical segment; that stretch reads IGIGVISLYGFQWVYSFIVFF. At 141–155 the chain is on the cytoplasmic side; that stretch reads FPGGSTNLKSGLLPW. His-156 contributes to the heme b binding site. A helical transmembrane segment spans residues 156–176; sequence HAMLGLFVYILAVGNAALGFL. Over 177–193 the chain is Lumenal; sequence EKLTFLENGGLDKYGSE. A helical transmembrane segment spans residues 194–214; it reads AFLINFTAIITILFGAFVVLT. Over 215-239 the chain is Cytoplasmic; that stretch reads ASAESPSPSPSVSNDDSVDFSYSAI. Residues 217–239 are disordered; sequence AESPSPSPSVSNDDSVDFSYSAI. Residues 224-239 show a composition bias toward low complexity; that stretch reads PSVSNDDSVDFSYSAI.

In terms of assembly, homodimer. Heme b is required as a cofactor. In terms of tissue distribution, expressed in roots, seedlings and leaves. Lower expression in flowers. Expressed in the L1 layer of the shoot apex, in the epidermis of leaf primordia and young leaves and in vascular bundles. In the differentiation zone of the root, detected in the pericycle and in the epidermis, but not in the cortex. Strongly expressed in the lateral part of the root cap and in the epidermis of the root tip, but not in the meristematic tissue. Not expressed in lateral roots. In mature embryos, expressed in the epidermis, cotyledon tips and root tips.

Its subcellular location is the vacuole membrane. The catalysed reaction is Fe(3+)(out) + L-ascorbate(in) = monodehydro-L-ascorbate radical(in) + Fe(2+)(out) + H(+). In terms of biological role, two-heme-containing cytochrome. Catalyzes ascorbate-dependent trans-membrane ferric-chelate reduction. Able to use dihydrolipoic acid (DHLA) as an alternative substrate to ascorbate. The polypeptide is Transmembrane ascorbate ferrireductase 1 (CYB561A) (Arabidopsis thaliana (Mouse-ear cress)).